We begin with the raw amino-acid sequence, 126 residues long: Aspartate 1-decarboxylase (126 aa).

Ser-25 serves as the catalytic Schiff-base intermediate with substrate; via pyruvic acid. Residue Ser-25 is modified to Pyruvic acid (Ser). Thr-57 lines the substrate pocket. Tyr-58 (proton donor) is an active-site residue. Substrate is bound at residue 73 to 75; sequence GGA.

Belongs to the PanD family. In terms of assembly, heterooctamer of four alpha and four beta subunits. The cofactor is pyruvate. Post-translationally, is synthesized initially as an inactive proenzyme, which is activated by self-cleavage at a specific serine bond to produce a beta-subunit with a hydroxyl group at its C-terminus and an alpha-subunit with a pyruvoyl group at its N-terminus.

Its subcellular location is the cytoplasm. It carries out the reaction L-aspartate + H(+) = beta-alanine + CO2. It participates in cofactor biosynthesis; (R)-pantothenate biosynthesis; beta-alanine from L-aspartate: step 1/1. In terms of biological role, catalyzes the pyruvoyl-dependent decarboxylation of aspartate to produce beta-alanine. This chain is Aspartate 1-decarboxylase, found in Stenotrophomonas maltophilia (strain R551-3).